We begin with the raw amino-acid sequence, 456 residues long: tRNA(Ile)-lysidine synthase (456 aa).

27-32 (SGGVDS) provides a ligand contact to ATP.

It belongs to the tRNA(Ile)-lysidine synthase family.

The protein localises to the cytoplasm. It catalyses the reaction cytidine(34) in tRNA(Ile2) + L-lysine + ATP = lysidine(34) in tRNA(Ile2) + AMP + diphosphate + H(+). Functionally, ligates lysine onto the cytidine present at position 34 of the AUA codon-specific tRNA(Ile) that contains the anticodon CAU, in an ATP-dependent manner. Cytidine is converted to lysidine, thus changing the amino acid specificity of the tRNA from methionine to isoleucine. This is tRNA(Ile)-lysidine synthase from Vibrio atlanticus (strain LGP32) (Vibrio splendidus (strain Mel32)).